We begin with the raw amino-acid sequence, 376 residues long: Queuine tRNA-ribosyltransferase (376 aa).

Catalysis depends on aspartate 90, which acts as the Proton acceptor. Substrate is bound by residues 90–94, aspartate 144, glutamine 193, and glycine 220; that span reads DSGGF. Residues 251–257 are RNA binding; sequence GVGTPED. Aspartate 270 functions as the Nucleophile in the catalytic mechanism. Positions 275–279 are RNA binding; important for wobble base 34 recognition; the sequence is TRNAR. Positions 308, 310, 313, and 339 each coordinate Zn(2+).

This sequence belongs to the queuine tRNA-ribosyltransferase family. As to quaternary structure, homodimer. Within each dimer, one monomer is responsible for RNA recognition and catalysis, while the other monomer binds to the replacement base PreQ1. The cofactor is Zn(2+).

The catalysed reaction is 7-aminomethyl-7-carbaguanine + guanosine(34) in tRNA = 7-aminomethyl-7-carbaguanosine(34) in tRNA + guanine. It functions in the pathway tRNA modification; tRNA-queuosine biosynthesis. In terms of biological role, catalyzes the base-exchange of a guanine (G) residue with the queuine precursor 7-aminomethyl-7-deazaguanine (PreQ1) at position 34 (anticodon wobble position) in tRNAs with GU(N) anticodons (tRNA-Asp, -Asn, -His and -Tyr). Catalysis occurs through a double-displacement mechanism. The nucleophile active site attacks the C1' of nucleotide 34 to detach the guanine base from the RNA, forming a covalent enzyme-RNA intermediate. The proton acceptor active site deprotonates the incoming PreQ1, allowing a nucleophilic attack on the C1' of the ribose to form the product. After dissociation, two additional enzymatic reactions on the tRNA convert PreQ1 to queuine (Q), resulting in the hypermodified nucleoside queuosine (7-(((4,5-cis-dihydroxy-2-cyclopenten-1-yl)amino)methyl)-7-deazaguanosine). This is Queuine tRNA-ribosyltransferase from Campylobacter concisus (strain 13826).